The primary structure comprises 193 residues: 3-isopropylmalate dehydratase small subunit (193 aa).

Belongs to the LeuD family. LeuD type 1 subfamily. As to quaternary structure, heterodimer of LeuC and LeuD.

It catalyses the reaction (2R,3S)-3-isopropylmalate = (2S)-2-isopropylmalate. The protein operates within amino-acid biosynthesis; L-leucine biosynthesis; L-leucine from 3-methyl-2-oxobutanoate: step 2/4. Its function is as follows. Catalyzes the isomerization between 2-isopropylmalate and 3-isopropylmalate, via the formation of 2-isopropylmaleate. This is 3-isopropylmalate dehydratase small subunit from Listeria innocua serovar 6a (strain ATCC BAA-680 / CLIP 11262).